The primary structure comprises 227 residues: Sperm-associated antigen 7 (227 aa).

The tract at residues 1–45 (MADLLGSILSSMEKPPSLGDQESRRKAREQAARLKKLQEQDKQQK) is disordered. An N-acetylalanine modification is found at alanine 2. Basic and acidic residues predominate over residues 21–45 (QESRRKAREQAARLKKLQEQDKQQK). Positions 35–51 (KKLQEQDKQQKVEFRKR) match the Nuclear localization signal motif. The R3H domain occupies 46–109 (VEFRKRMEKE…DCRYVMIFKK (64 aa)). The residue at position 114 (serine 114) is a Phosphoserine. Residues 118–161 (LDSYRHGEEWDPQKAEEKRKLKELAQKQEEEAAQQGPAVVSPAS) are disordered. Positions 119 to 147 (DSYRHGEEWDPQKAEEKRKLKELAQKQEE) are enriched in basic and acidic residues. The short motif at 122-139 (RHGEEWDPQKAEEKRKLK) is the Nuclear localization signal element. Serine 158 and serine 202 each carry phosphoserine.

It localises to the nucleus. This chain is Sperm-associated antigen 7 (Spag7), found in Mus musculus (Mouse).